Reading from the N-terminus, the 228-residue chain is UPF0758 protein Reut_A2732 (228 aa).

An MPN domain is found at 102–224 (GLDSPAAVRS…VHSFAEHGEL (123 aa)). Zn(2+) is bound by residues histidine 173, histidine 175, and aspartate 186. The short motif at 173-186 (HNHPSGCCTPSQSD) is the JAMM motif element.

Belongs to the UPF0758 family.

This is UPF0758 protein Reut_A2732 from Cupriavidus pinatubonensis (strain JMP 134 / LMG 1197) (Cupriavidus necator (strain JMP 134)).